The sequence spans 395 residues: S-adenosylmethionine synthase (395 aa).

ATP is bound at residue His16. Residue Asp18 coordinates Mg(2+). Glu44 is a binding site for K(+). L-methionine is bound by residues Glu57 and Gln100. Residues 100 to 110 are flexible loop; the sequence is QSPDIAQGVDR. ATP is bound by residues 167-169, 233-234, Asp242, 248-249, Ala265, and Lys269; these read DAK, RF, and RK. Asp242 contacts L-methionine. Lys273 is an L-methionine binding site.

The protein belongs to the AdoMet synthase family. In terms of assembly, homotetramer; dimer of dimers. Mg(2+) serves as cofactor. It depends on K(+) as a cofactor.

It localises to the cytoplasm. The catalysed reaction is L-methionine + ATP + H2O = S-adenosyl-L-methionine + phosphate + diphosphate. It participates in amino-acid biosynthesis; S-adenosyl-L-methionine biosynthesis; S-adenosyl-L-methionine from L-methionine: step 1/1. Functionally, catalyzes the formation of S-adenosylmethionine (AdoMet) from methionine and ATP. The overall synthetic reaction is composed of two sequential steps, AdoMet formation and the subsequent tripolyphosphate hydrolysis which occurs prior to release of AdoMet from the enzyme. The polypeptide is S-adenosylmethionine synthase (Burkholderia lata (strain ATCC 17760 / DSM 23089 / LMG 22485 / NCIMB 9086 / R18194 / 383)).